Here is a 192-residue protein sequence, read N- to C-terminus: MGQIEWAMWANEQALASGLILITGGIVATAGQFAQWYLGAYSIAAGVLICLLEYPRGKRSKGSTMERCGQKYLTRAVKVFGPLTSNYYIRAFLHLGLSVPAGFLLATILGTACLAIASSIYLLAAIHGEHWTPIETKPKERPQVGGTIKQPPSNPPPRPPAEARKKPSEEEVAGVPGGGPQENPMPVTDEVV.

Topologically, residues 2 to 7 (GQIEWA) are cytoplasmic. A helical membrane pass occupies residues 8-30 (MWANEQALASGLILITGGIVATA). Topologically, residues 31–35 (GQFAQ) are extracellular. Residues 36 to 53 (WYLGAYSIAAGVLICLLE) form a helical membrane-spanning segment. Residues 54-69 (YPRGKRSKGSTMERCG) lie on the Cytoplasmic side of the membrane. An intramembrane segment occupies 70-80 (QKYLTRAVKVF). Residues 81 to 86 (GPLTSN) are Cytoplasmic-facing. The helical transmembrane segment at 87-104 (YYIRAFLHLGLSVPAGFL) threads the bilayer. Leucine 105 is a topological domain (extracellular). Residues 106-126 (ATILGTACLAIASSIYLLAAI) form a helical membrane-spanning segment. At 127–192 (HGEHWTPIET…NPMPVTDEVV (66 aa)) the chain is on the cytoplasmic side. The disordered stretch occupies residues 134–192 (IETKPKERPQVGGTIKQPPSNPPPRPPAEARKKPSEEEVAGVPGGGPQENPMPVTDEVV). Threonine 147 bears the Phosphothreonine mark. A Glycyl lysine isopeptide (Lys-Gly) (interchain with G-Cter in ubiquitin) cross-link involves residue lysine 149. Serine 168 carries the post-translational modification Phosphoserine.

The protein belongs to the p22phox family. Component of the phagocyte NADPH oxidase core complex/cytochrome b558 complex, composed of CYBB (heavy chain (beta)) and CYBA (light chain (alpha)). Component of the phagocyte NADPH oxidase complex composed of an obligatory core heterodimer formed by the membrane proteins CYBA and CYBB and the cytosolic regulatory subunits NCF1/p47-phox, NCF2/p67-phox, NCF4/p40-phox and the small GTPase RAC1 or RAC2. Interacts with NCF1 (via SH3 domain). Interacts with SH3PXD2A. Interacts with DUOX1, DUOX2 and TPO. Interacts with NOX4; this interaction mediates superoxide generation. Interacts with calprotectin (S100A8/9). Interacts with GBP7. Interacts with NOXO1. Forms a heterodimer with NOX3 and is essential for activity and cell membrane localization of NOX3. Interacts with NOX1. Phosphorylation at Thr-147 enhances NADPH oxidase activity by promoting NCF1/p47-phox binding. Post-translationally, ubiquitinated at Lys-149 likely by RNF145.

The protein resides in the cell membrane. In terms of biological role, subunit of NADPH oxidase complexes that is required for the NADPH oxidase activity that generates, in various cell types, superoxide from molecular oxygen utilizing NADPH as an electron donor. Subunit of the phagocyte NADPH oxidase complex that mediates the transfer of electrons from cytosolic NADPH to O2 to produce the superoxide anion (O2(-)). In the activated complex, electrons are first transferred from NADPH to flavin adenine dinucleotide (FAD) and subsequently transferred via two heme molecules to molecular oxygen, producing superoxide through an outer-sphere reaction. Activation of the NADPH oxidase complex is initiated by the assembly of cytosolic subunits of the NADPH oxidase complex with the core NADPH oxidase complex to form a complex at the plasma membrane or phagosomal membrane. This activation process is initiated by phosphorylation dependent binding of the cytosolic NCF1/p47-phox subunit to the C-terminus of CYBA/p22-phox. Aassociates with NOX3 to form a functional NADPH oxidase constitutively generating superoxide. The chain is Cytochrome b-245 light chain from Tursiops truncatus (Atlantic bottle-nosed dolphin).